Consider the following 432-residue polypeptide: Glutamyl-tRNA reductase (432 aa).

Substrate is bound by residues 49-52, Ser-107, 112-114, and Gln-118; these read TCNR and ETQ. Catalysis depends on Cys-50, which acts as the Nucleophile. 186–191 contributes to the NADP(+) binding site; it reads GAGEMG.

Belongs to the glutamyl-tRNA reductase family. In terms of assembly, homodimer.

The catalysed reaction is (S)-4-amino-5-oxopentanoate + tRNA(Glu) + NADP(+) = L-glutamyl-tRNA(Glu) + NADPH + H(+). Its pathway is porphyrin-containing compound metabolism; protoporphyrin-IX biosynthesis; 5-aminolevulinate from L-glutamyl-tRNA(Glu): step 1/2. In terms of biological role, catalyzes the NADPH-dependent reduction of glutamyl-tRNA(Glu) to glutamate 1-semialdehyde (GSA). This is Glutamyl-tRNA reductase from Campylobacter jejuni subsp. jejuni serotype O:6 (strain 81116 / NCTC 11828).